We begin with the raw amino-acid sequence, 304 residues long: N-acetylmuramic acid 6-phosphate etherase 1 (304 aa).

Residues 1–10 (MENSHLGSLT) are compositionally biased toward polar residues. The disordered stretch occupies residues 1 to 20 (MENSHLGSLTTERRNERSKR). The 164-residue stretch at 58–221 (AVGSLKKGGR…STAAMIKMGK (164 aa)) folds into the SIS domain. E86 functions as the Proton donor in the catalytic mechanism. Residue E117 is part of the active site.

It belongs to the GCKR-like family. MurNAc-6-P etherase subfamily. As to quaternary structure, homodimer.

It carries out the reaction N-acetyl-D-muramate 6-phosphate + H2O = N-acetyl-D-glucosamine 6-phosphate + (R)-lactate. The protein operates within amino-sugar metabolism; N-acetylmuramate degradation. Functionally, specifically catalyzes the cleavage of the D-lactyl ether substituent of MurNAc 6-phosphate, producing GlcNAc 6-phosphate and D-lactate. This chain is N-acetylmuramic acid 6-phosphate etherase 1, found in Bacillus licheniformis (strain ATCC 14580 / DSM 13 / JCM 2505 / CCUG 7422 / NBRC 12200 / NCIMB 9375 / NCTC 10341 / NRRL NRS-1264 / Gibson 46).